Reading from the N-terminus, the 463-residue chain is Asparagine--tRNA ligase (463 aa).

It belongs to the class-II aminoacyl-tRNA synthetase family. Homodimer.

The protein localises to the cytoplasm. It carries out the reaction tRNA(Asn) + L-asparagine + ATP = L-asparaginyl-tRNA(Asn) + AMP + diphosphate + H(+). This is Asparagine--tRNA ligase from Desulfitobacterium hafniense (strain Y51).